The sequence spans 904 residues: Envelope glycoprotein B (904 aa).

A signal peptide spans 1–22; sequence MRGGGLICALVVGALVAAVASA. The Virion surface portion of the chain corresponds to 23-771; the sequence is APAAPAAPRA…SGVSSFMSNP (749 aa). The tract at residues 40-83 is disordered; the sequence is VAANGGPASRPPPVPSPATTKARKRKTKKPPKRPEATPPPDANA. Basic residues predominate over residues 60-70; that stretch reads KARKRKTKKPP. 2 N-linked (GlcNAc...) asparagine; by host glycosylation sites follow: Asn82 and Asn136. 5 disulfide bridges follow: Cys111-Cys570, Cys128-Cys526, Cys202-Cys266, Cys359-Cys407, and Cys593-Cys630. 2 involved in fusion and/or binding to host membrane regions span residues 168–174 and 253–260; these read VWFGHRY and RVEAFHRY. Asn393, Asn425, and Asn486 each carry an N-linked (GlcNAc...) asparagine; by host glycan. The segment at 467-490 is disordered; sequence QDRKPRNATPAPLREAPSANASVE. N-linked (GlcNAc...) asparagine; by host glycosylation occurs at Asn671. 2 hydrophobic membrane proximal region regions span residues 716–769 and 728–768; these read IDTV…SFMS and MFAG…SSFM. A helical transmembrane segment spans residues 772–792; it reads FGALAVGLLVLAGLVAAFFAF. Residues 793–904 are Intravirion-facing; that stretch reads RYVLQLQRNP…EDEAGDEDEL (112 aa). The segment at 816–835 is disordered; that stretch reads TSDPGGVGGEGEEGAEGGGF. The short motif at 849 to 852 is the Golgi targeting element; that stretch reads YMAL. Residues 883–904 form a disordered region; the sequence is KRNKARYSPLHNEDEAGDEDEL. The Internalization motif signature appears at 889–892; the sequence is YSPL.

Belongs to the herpesviridae glycoprotein B family. Homotrimer; disulfide-linked. Binds to heparan sulfate proteoglycans. Interacts with gH/gL heterodimer.

The protein resides in the virion membrane. It localises to the host cell membrane. It is found in the host endosome membrane. The protein localises to the host Golgi apparatus membrane. Envelope glycoprotein that forms spikes at the surface of virion envelope. Essential for the initial attachment to heparan sulfate moieties of the host cell surface proteoglycans. Involved in fusion of viral and cellular membranes leading to virus entry into the host cell. Following initial binding to its host receptors, membrane fusion is mediated by the fusion machinery composed at least of gB and the heterodimer gH/gL. May be involved in the fusion between the virion envelope and the outer nuclear membrane during virion egress. This is Envelope glycoprotein B from Homo sapiens (Human).